A 272-amino-acid chain; its full sequence is Putative phosphatase HI_0597 (272 aa).

D11 functions as the Nucleophile in the catalytic mechanism. D11 is a Mg(2+) binding site. Phosphate is bound at residue L12. Residue D13 coordinates Mg(2+). Phosphate contacts are provided by residues 45–46 (TG) and K195. A Mg(2+)-binding site is contributed by D218. Residue N221 coordinates phosphate.

Belongs to the HAD-like hydrolase superfamily. Cof family. The cofactor is Mg(2+).

This chain is Putative phosphatase HI_0597, found in Haemophilus influenzae (strain ATCC 51907 / DSM 11121 / KW20 / Rd).